Here is a 160-residue protein sequence, read N- to C-terminus: Cytochrome b6-f complex subunit 4 (160 aa).

Helical transmembrane passes span 36 to 56 (LLYM…SLAV), 95 to 115 (LLGV…PFIE), and 131 to 151 (TLFL…ALPI).

Belongs to the cytochrome b family. PetD subfamily. In terms of assembly, the 4 large subunits of the cytochrome b6-f complex are cytochrome b6, subunit IV (17 kDa polypeptide, petD), cytochrome f and the Rieske protein, while the 4 small subunits are petG, petL, petM and petN. The complex functions as a dimer.

The protein resides in the plastid. Its subcellular location is the chloroplast thylakoid membrane. Its function is as follows. Component of the cytochrome b6-f complex, which mediates electron transfer between photosystem II (PSII) and photosystem I (PSI), cyclic electron flow around PSI, and state transitions. This chain is Cytochrome b6-f complex subunit 4, found in Oltmannsiellopsis viridis (Marine flagellate).